Reading from the N-terminus, the 150-residue chain is SsrA-binding protein (150 aa).

The protein belongs to the SmpB family.

It is found in the cytoplasm. Its function is as follows. Required for rescue of stalled ribosomes mediated by trans-translation. Binds to transfer-messenger RNA (tmRNA), required for stable association of tmRNA with ribosomes. tmRNA and SmpB together mimic tRNA shape, replacing the anticodon stem-loop with SmpB. tmRNA is encoded by the ssrA gene; the 2 termini fold to resemble tRNA(Ala) and it encodes a 'tag peptide', a short internal open reading frame. During trans-translation Ala-aminoacylated tmRNA acts like a tRNA, entering the A-site of stalled ribosomes, displacing the stalled mRNA. The ribosome then switches to translate the ORF on the tmRNA; the nascent peptide is terminated with the 'tag peptide' encoded by the tmRNA and targeted for degradation. The ribosome is freed to recommence translation, which seems to be the essential function of trans-translation. The protein is SsrA-binding protein of Flavobacterium psychrophilum (strain ATCC 49511 / DSM 21280 / CIP 103535 / JIP02/86).